We begin with the raw amino-acid sequence, 391 residues long: Phosphoglycerate kinase (391 aa).

Residues 21-23, Arg36, 59-62, Arg113, and Arg146 each bind substrate; these read DLN and HLGR. ATP-binding positions include Lys197, Glu319, and 345-348; that span reads GGDT.

It belongs to the phosphoglycerate kinase family. As to quaternary structure, monomer.

The protein localises to the cytoplasm. It carries out the reaction (2R)-3-phosphoglycerate + ATP = (2R)-3-phospho-glyceroyl phosphate + ADP. Its pathway is carbohydrate degradation; glycolysis; pyruvate from D-glyceraldehyde 3-phosphate: step 2/5. This Xanthomonas oryzae pv. oryzae (strain PXO99A) protein is Phosphoglycerate kinase.